Reading from the N-terminus, the 162-residue chain is Regulator of sigma D (162 aa).

Belongs to the Rsd/AlgQ family. In terms of assembly, interacts with RpoD.

The protein localises to the cytoplasm. Its function is as follows. Binds RpoD and negatively regulates RpoD-mediated transcription activation by preventing the interaction between the primary sigma factor RpoD with the catalytic core of the RNA polymerase and with promoter DNA. May be involved in replacement of the RNA polymerase sigma subunit from RpoD to RpoS during the transition from exponential growth to the stationary phase. This chain is Regulator of sigma D, found in Salmonella paratyphi A (strain ATCC 9150 / SARB42).